We begin with the raw amino-acid sequence, 434 residues long: Probable glucuronosyltransferase Os02g0520750 (434 aa).

Residues 1-10 (MVGARAGRVP) lie on the Cytoplasmic side of the membrane. Residues 11-31 (AAAAAAAAVLIVAACVFSSLA) form a helical; Signal-anchor for type II membrane protein membrane-spanning segment. Residues 32-434 (GAAAAAEVVG…GPVADLKPWK (403 aa)) are Lumenal-facing. 2 N-linked (GlcNAc...) asparagine glycosylation sites follow: asparagine 160 and asparagine 421.

Belongs to the glycosyltransferase 47 family.

It localises to the golgi apparatus membrane. Involved in the synthesis of glucuronoxylan hemicellulose in secondary cell walls. In Oryza sativa subsp. japonica (Rice), this protein is Probable glucuronosyltransferase Os02g0520750.